Consider the following 106-residue polypeptide: Small ribosomal subunit protein bS18 (106 aa).

Residues 1–22 (MSEETTVRPERTERSERPERPQ) show a composition bias toward basic and acidic residues. Positions 1–34 (MSEETTVRPERTERSERPERPQYRGNGPRKRRPF) are disordered.

The protein belongs to the bacterial ribosomal protein bS18 family. As to quaternary structure, part of the 30S ribosomal subunit. Forms a tight heterodimer with protein bS6.

Functionally, binds as a heterodimer with protein bS6 to the central domain of the 16S rRNA, where it helps stabilize the platform of the 30S subunit. This Geobacter metallireducens (strain ATCC 53774 / DSM 7210 / GS-15) protein is Small ribosomal subunit protein bS18.